Here is a 183-residue protein sequence, read N- to C-terminus: Peptide deformylase (183 aa).

Fe cation-binding residues include Cys-90 and His-132. The active site involves Glu-133. His-136 contributes to the Fe cation binding site.

Belongs to the polypeptide deformylase family. Fe(2+) serves as cofactor.

It carries out the reaction N-terminal N-formyl-L-methionyl-[peptide] + H2O = N-terminal L-methionyl-[peptide] + formate. Functionally, removes the formyl group from the N-terminal Met of newly synthesized proteins. Requires at least a dipeptide for an efficient rate of reaction. N-terminal L-methionine is a prerequisite for activity but the enzyme has broad specificity at other positions. The chain is Peptide deformylase from Parafrankia sp. (strain EAN1pec).